The following is a 214-amino-acid chain: Ribonuclease HII (214 aa).

Residues 26–214 (EIVCGVDEAG…PVREAFDLIR (189 aa)) form the RNase H type-2 domain. The a divalent metal cation site is built by Asp-32, Glu-33, and Asp-124.

Belongs to the RNase HII family. It depends on Mn(2+) as a cofactor. The cofactor is Mg(2+).

The protein localises to the cytoplasm. It carries out the reaction Endonucleolytic cleavage to 5'-phosphomonoester.. Its function is as follows. Endonuclease that specifically degrades the RNA of RNA-DNA hybrids. The chain is Ribonuclease HII from Burkholderia thailandensis (strain ATCC 700388 / DSM 13276 / CCUG 48851 / CIP 106301 / E264).